Here is a 310-residue protein sequence, read N- to C-terminus: Zinc finger protein 346 (310 aa).

An N-acetylmethionine modification is found at Met-1. Over residues 1–12 (MEYPAPAAVQAA) the composition is skewed to low complexity. Residues 1 to 33 (MEYPAPAAVQAADGGGAGPYNSSELLEGQEPDG) form a disordered region. The segment at 70–104 (FTNTQCKVCCALLISESQKLAHYQSKKHANKVKRY) adopts a Matrin-type 1 zinc-finger fold. Cys-75, Cys-78, His-91, and His-97 together coordinate Zn(2+). Residue Lys-114 forms a Glycyl lysine isopeptide (Lys-Gly) (interchain with G-Cter in SUMO2) linkage. A Matrin-type 2 zinc finger spans residues 131-165 (DKNQCCPICNMTFSSPVVAQSHYLGKTHAKNLKLK). Residues Cys-136, Cys-139, His-152, and His-158 each coordinate Zn(2+). Residue Lys-170 forms a Glycyl lysine isopeptide (Lys-Gly) (interchain with G-Cter in SUMO2) linkage. Matrin-type zinc fingers lie at residues 198–232 (DPDK…ETKL) and 252–286 (GKGY…SPKT). The tract at residues 278-310 (KHKNQSPKTVASSLGQIPMQRQPIQKDSTTLED) is disordered. 2 stretches are compositionally biased toward polar residues: residues 283–292 (SPKTVASSLG) and 299–310 (QPIQKDSTTLED).

As to quaternary structure, forms a heteromeric complex with XPO5 and ILF3. Found in a nuclear export complex with XPO5, RAN, ILF3, ZNF346 and double-stranded RNA. Interacts with XPO5. Interacts with ILF3 in an RNA-independent manner.

The protein resides in the nucleus. It is found in the nucleolus. The protein localises to the cytoplasm. Its function is as follows. Binds with low affinity to dsDNA and ssRNA, and with high affinity to dsRNA, with no detectable sequence specificity. The polypeptide is Zinc finger protein 346 (ZNF346) (Pongo abelii (Sumatran orangutan)).